The primary structure comprises 312 residues: D-alanine--D-alanine ligase (312 aa).

Residues 99 to 304 (KKILKAEGIP…FEDLVEKILM (206 aa)) form the ATP-grasp domain. 131–186 (LQTLKLPVVIKAPREGSTIGIEFVFSKQELPKAIKKVLEIDKQLLVEEFIEGVEVT) is a binding site for ATP. Mg(2+)-binding residues include D257, E271, and N273.

This sequence belongs to the D-alanine--D-alanine ligase family. It depends on Mg(2+) as a cofactor. Requires Mn(2+) as cofactor.

It localises to the cytoplasm. The enzyme catalyses 2 D-alanine + ATP = D-alanyl-D-alanine + ADP + phosphate + H(+). The protein operates within cell wall biogenesis; peptidoglycan biosynthesis. In terms of biological role, cell wall formation. The sequence is that of D-alanine--D-alanine ligase from Carboxydothermus hydrogenoformans (strain ATCC BAA-161 / DSM 6008 / Z-2901).